We begin with the raw amino-acid sequence, 482 residues long: Auxin transporter-like protein 2 (482 aa).

The Cytoplasmic portion of the chain corresponds to 1 to 58 (MVPAGDQAEEAIVADAGKEEAEVRAAMGVEQDGKFSMTSLLWHGGSVWDAWFSCASNQ). A helical membrane pass occupies residues 59 to 76 (VAQVLLTLPYSFSQLGML). Over 77–78 (SG) the chain is Extracellular. The helical transmembrane segment at 79 to 99 (LLLQVFYGLMGSWTAYLISVL) threads the bilayer. At 100-134 (YVEYRARKEKEGVSFKNHVIQWFEVLDGLLGPYWK) the chain is on the cytoplasmic side. A helical transmembrane segment spans residues 135 to 155 (AAGLAFNCTFLLFGSVIQLIA). Residues 156 to 171 (CASNIYYINDRLDKRT) are Extracellular-facing. A helical transmembrane segment spans residues 172–192 (WTYIFGACCSTTVFIPSFHNY). Arginine 193 is a topological domain (cytoplasmic). Residues 194 to 214 (IWSFLGLGMTTYTAWYLAIAA) traverse the membrane as a helical segment. Over 215-231 (AVHGQVDGVTHSGPSKM) the chain is Extracellular. Residues 232–252 (VLYFTGATNILYTFGGHAVTV) form a helical membrane-spanning segment. Topologically, residues 253–265 (EIMHAMWKPQKFK) are cytoplasmic. A helical membrane pass occupies residues 266 to 286 (YIYLVATLYVFTLTLPSASAM). At 287-313 (YWAFGDALLTHSNAFSLLPRSGWRDAA) the chain is on the extracellular side. The chain crosses the membrane as a helical span at residues 314-334 (VILMLIHQFITFGFACTPLYF). The Cytoplasmic segment spans residues 335–355 (VWEKAIGMHGTRSVLTRALAR). Residues 356–376 (LPIVVPIWFLAIIFPFFGPIN) traverse the membrane as a helical segment. Serine 377 is a topological domain (extracellular). Residues 378 to 398 (AVGALLVSFTVYIIPSLSHIL) form a helical membrane-spanning segment. Residues 399 to 423 (TYRSASARLNAAEKPPPFLPSWSGM) lie on the Cytoplasmic side of the membrane. Residues 424–444 (FVVNVFVVAWVLVVGFGLGGW) form a helical membrane-spanning segment. At 445 to 482 (ASVTNFIKQIDTFGLFAKCYQCPPRAHAGAPLPAPPRH) the chain is on the extracellular side.

It belongs to the amino acid/polyamine transporter 2 family. Amino acid/auxin permease (AAAP) (TC 2.A.18.1) subfamily.

The protein resides in the cell membrane. In terms of biological role, carrier protein involved in proton-driven auxin influx. May mediate the formation of auxin gradient from developing leaves (site of auxin biosynthesis) to tips. This is Auxin transporter-like protein 2 from Oryza sativa subsp. japonica (Rice).